We begin with the raw amino-acid sequence, 378 residues long: Interleukin-3 receptor subunit alpha (378 aa).

The first 18 residues, 1 to 18, serve as a signal peptide directing secretion; that stretch reads MVLLWLTLLLIALPCLLQ. The Extracellular portion of the chain corresponds to 19 to 305; it reads TKEDPNPPIT…EEGANTRAWR (287 aa). Asn46, Asn64, Asn80, and Asn109 each carry an N-linked (GlcNAc...) asparagine glycan. Cystine bridges form between Cys52/Cys68, Cys76/Cys195, Cys112/Cys122, and Cys151/Cys165. N-linked (GlcNAc...) asparagine glycosylation is found at Asn212 and Asn218. An intrachain disulfide couples Cys217 to Cys293. Residues 282 to 286 carry the WSXWS motif motif; that stretch reads LSAWS. The chain crosses the membrane as a helical span at residues 306-325; sequence TSLLIALGTLLALVCVFVIC. The Cytoplasmic segment spans residues 326 to 378; the sequence is RRYLVMQRLFPRIPHMKDPIGDSFQNDKLVVWEAGKAGLEECLVTEVQVVQKT. The short motif at 334–342 is the Box 1 motif element; the sequence is LFPRIPHMK.

Belongs to the type I cytokine receptor family. Type 5 subfamily. In terms of assembly, interacts with IL3. Heterodimer of an alpha and a beta subunit. The beta subunit is common to the IL3, IL5 and GM-CSF receptors. In terms of processing, ubiquitinated by RNFT2 in response to IL3. Ubiquitination leads ligand-induced degradation by the proteasome. Ubiquitinated by RNF128 via 'Lys-27'-linked polyubiquitination, facilitating its degradation through the lysosomal pathway.

The protein resides in the cell membrane. Functionally, cell surface receptor for IL3 expressed on hematopoietic progenitor cells, monocytes and B-lymphocytes that controls the production and differentiation of hematopoietic progenitor cells into lineage-restricted cells. Ligand stimulation rapidly induces hetrodimerization with IL3RB, phosphorylation and enzyme activity of effector proteins such as JAK2 and PI3K that play a role in signaling cell proliferation and differentiation. Activation of JAK2 leads to STAT5-mediated transcriptional program. The protein is Interleukin-3 receptor subunit alpha of Homo sapiens (Human).